Here is a 389-residue protein sequence, read N- to C-terminus: Diaminopimelate decarboxylase (389 aa).

Lys-58 is subject to N6-(pyridoxal phosphate)lysine. Pyridoxal 5'-phosphate contacts are provided by residues Gly-233 and 271-274; that span reads ELGR. 5 residues coordinate substrate: Arg-274, Arg-310, Tyr-314, Glu-342, and Tyr-370. Residue Tyr-370 participates in pyridoxal 5'-phosphate binding.

It belongs to the Orn/Lys/Arg decarboxylase class-II family. LysA subfamily. As to quaternary structure, homodimer. It depends on pyridoxal 5'-phosphate as a cofactor.

The catalysed reaction is meso-2,6-diaminopimelate + H(+) = L-lysine + CO2. It participates in amino-acid biosynthesis; L-lysine biosynthesis via DAP pathway; L-lysine from DL-2,6-diaminopimelate: step 1/1. Functionally, specifically catalyzes the decarboxylation of meso-diaminopimelate (meso-DAP) to L-lysine. The protein is Diaminopimelate decarboxylase of Francisella tularensis subsp. holarctica (strain LVS).